Here is a 188-residue protein sequence, read N- to C-terminus: 3-hydroxyanthranilate 3,4-dioxygenase 2 (188 aa).

Residue Arg-46 participates in O2 binding. His-50, Glu-70, and His-108 together coordinate Fe cation. Glu-70 is a binding site for substrate. 2 residues coordinate substrate: Arg-112 and Glu-122.

The protein belongs to the 3-HAO family. It depends on Fe(2+) as a cofactor.

It localises to the cytoplasm. The enzyme catalyses 3-hydroxyanthranilate + O2 = (2Z,4Z)-2-amino-3-carboxymuconate 6-semialdehyde. The protein operates within cofactor biosynthesis; NAD(+) biosynthesis; quinolinate from L-kynurenine: step 3/3. Catalyzes the oxidative ring opening of 3-hydroxyanthranilate to 2-amino-3-carboxymuconate semialdehyde, which spontaneously cyclizes to quinolinate. The polypeptide is 3-hydroxyanthranilate 3,4-dioxygenase 2 (bna1-2) (Aspergillus fumigatus (strain CBS 144.89 / FGSC A1163 / CEA10) (Neosartorya fumigata)).